Consider the following 562-residue polypeptide: Dihydroxy-acid dehydratase (562 aa).

Asp80 is a Mg(2+) binding site. Cys121 serves as a coordination point for [2Fe-2S] cluster. Residues Asp122 and Lys123 each contribute to the Mg(2+) site. Position 123 is an N6-carboxylysine (Lys123). Cys194 contributes to the [2Fe-2S] cluster binding site. Glu446 serves as a coordination point for Mg(2+). Catalysis depends on Ser472, which acts as the Proton acceptor.

This sequence belongs to the IlvD/Edd family. In terms of assembly, homodimer. The cofactor is [2Fe-2S] cluster. Mg(2+) serves as cofactor.

The enzyme catalyses (2R)-2,3-dihydroxy-3-methylbutanoate = 3-methyl-2-oxobutanoate + H2O. It carries out the reaction (2R,3R)-2,3-dihydroxy-3-methylpentanoate = (S)-3-methyl-2-oxopentanoate + H2O. Its pathway is amino-acid biosynthesis; L-isoleucine biosynthesis; L-isoleucine from 2-oxobutanoate: step 3/4. It functions in the pathway amino-acid biosynthesis; L-valine biosynthesis; L-valine from pyruvate: step 3/4. Functionally, functions in the biosynthesis of branched-chain amino acids. Catalyzes the dehydration of (2R,3R)-2,3-dihydroxy-3-methylpentanoate (2,3-dihydroxy-3-methylvalerate) into 2-oxo-3-methylpentanoate (2-oxo-3-methylvalerate) and of (2R)-2,3-dihydroxy-3-methylbutanoate (2,3-dihydroxyisovalerate) into 2-oxo-3-methylbutanoate (2-oxoisovalerate), the penultimate precursor to L-isoleucine and L-valine, respectively. The sequence is that of Dihydroxy-acid dehydratase from Staphylococcus epidermidis (strain ATCC 35984 / DSM 28319 / BCRC 17069 / CCUG 31568 / BM 3577 / RP62A).